The primary structure comprises 66 residues: ATP synthase F(0) complex subunit 8 (66 aa).

Residue M1 is modified to N-formylmethionine. A helical membrane pass occupies residues 8–24; that stretch reads TWLTMILSMFLTLFIIF. Residue K54 is modified to N6-acetyllysine; alternate. K54 is subject to N6-succinyllysine; alternate. N6-acetyllysine is present on K57.

The protein belongs to the ATPase protein 8 family. As to quaternary structure, component of the ATP synthase complex composed at least of ATP5F1A/subunit alpha, ATP5F1B/subunit beta, ATP5MC1/subunit c (homooctomer), MT-ATP6/subunit a, MT-ATP8/subunit 8, ATP5ME/subunit e, ATP5MF/subunit f, ATP5MG/subunit g, ATP5MK/subunit k, ATP5MJ/subunit j, ATP5F1C/subunit gamma, ATP5F1D/subunit delta, ATP5F1E/subunit epsilon, ATP5PF/subunit F6, ATP5PB/subunit b, ATP5PD/subunit d, ATP5PO/subunit OSCP. ATP synthase complex consists of a soluble F(1) head domain (subunits alpha(3) and beta(3)) - the catalytic core - and a membrane F(0) domain - the membrane proton channel (subunits c, a, 8, e, f, g, k and j). These two domains are linked by a central stalk (subunits gamma, delta, and epsilon) rotating inside the F1 region and a stationary peripheral stalk (subunits F6, b, d, and OSCP). Interacts with PRICKLE3.

It localises to the mitochondrion membrane. Subunit 8, of the mitochondrial membrane ATP synthase complex (F(1)F(0) ATP synthase or Complex V) that produces ATP from ADP in the presence of a proton gradient across the membrane which is generated by electron transport complexes of the respiratory chain. ATP synthase complex consist of a soluble F(1) head domain - the catalytic core - and a membrane F(1) domain - the membrane proton channel. These two domains are linked by a central stalk rotating inside the F(1) region and a stationary peripheral stalk. During catalysis, ATP synthesis in the catalytic domain of F(1) is coupled via a rotary mechanism of the central stalk subunits to proton translocation. In vivo, can only synthesize ATP although its ATP hydrolase activity can be activated artificially in vitro. Part of the complex F(0) domain. This Bos taurus (Bovine) protein is ATP synthase F(0) complex subunit 8.